The primary structure comprises 156 residues: Endoribonuclease YbeY (156 aa).

3 residues coordinate Zn(2+): H117, H121, and H127.

Belongs to the endoribonuclease YbeY family. The cofactor is Zn(2+).

It is found in the cytoplasm. Single strand-specific metallo-endoribonuclease involved in late-stage 70S ribosome quality control and in maturation of the 3' terminus of the 16S rRNA. The protein is Endoribonuclease YbeY of Shewanella pealeana (strain ATCC 700345 / ANG-SQ1).